Here is a 120-residue protein sequence, read N- to C-terminus: Large ribosomal subunit protein bL12 (120 aa).

This sequence belongs to the bacterial ribosomal protein bL12 family. As to quaternary structure, homodimer. Part of the ribosomal stalk of the 50S ribosomal subunit. Forms a multimeric L10(L12)X complex, where L10 forms an elongated spine to which 2 to 4 L12 dimers bind in a sequential fashion. Binds GTP-bound translation factors.

Forms part of the ribosomal stalk which helps the ribosome interact with GTP-bound translation factors. Is thus essential for accurate translation. The sequence is that of Large ribosomal subunit protein bL12 from Lactobacillus gasseri (strain ATCC 33323 / DSM 20243 / BCRC 14619 / CIP 102991 / JCM 1131 / KCTC 3163 / NCIMB 11718 / NCTC 13722 / AM63).